Here is a 194-residue protein sequence, read N- to C-terminus: dTTP/UTP pyrophosphatase (194 aa).

D73 functions as the Proton acceptor in the catalytic mechanism.

The protein belongs to the Maf family. YhdE subfamily. A divalent metal cation serves as cofactor.

The protein localises to the cytoplasm. The enzyme catalyses dTTP + H2O = dTMP + diphosphate + H(+). It catalyses the reaction UTP + H2O = UMP + diphosphate + H(+). In terms of biological role, nucleoside triphosphate pyrophosphatase that hydrolyzes dTTP and UTP. May have a dual role in cell division arrest and in preventing the incorporation of modified nucleotides into cellular nucleic acids. The protein is dTTP/UTP pyrophosphatase of Clostridium botulinum (strain Loch Maree / Type A3).